The chain runs to 164 residues: MLHEPRFWSAVAFVLFFVLFGKKLWTPLAAALDSRADRIRADLDEAARLRREAEQMLEDATRERETAMVEARALVEHSLIEAARIADEARREAEAVATRREQMARDRIAASERSAVREVRQVAIDVAIQATRDVLATALPAGADHAIVDRAIADLPSALSHRAA.

A helical membrane pass occupies residues 10–32; sequence AVAFVLFFVLFGKKLWTPLAAAL.

Belongs to the ATPase B chain family. As to quaternary structure, F-type ATPases have 2 components, F(1) - the catalytic core - and F(0) - the membrane proton channel. F(1) has five subunits: alpha(3), beta(3), gamma(1), delta(1), epsilon(1). F(0) has three main subunits: a(1), b(2) and c(10-14). The alpha and beta chains form an alternating ring which encloses part of the gamma chain. F(1) is attached to F(0) by a central stalk formed by the gamma and epsilon chains, while a peripheral stalk is formed by the delta and b chains.

Its subcellular location is the cell inner membrane. In terms of biological role, f(1)F(0) ATP synthase produces ATP from ADP in the presence of a proton or sodium gradient. F-type ATPases consist of two structural domains, F(1) containing the extramembraneous catalytic core and F(0) containing the membrane proton channel, linked together by a central stalk and a peripheral stalk. During catalysis, ATP synthesis in the catalytic domain of F(1) is coupled via a rotary mechanism of the central stalk subunits to proton translocation. Functionally, component of the F(0) channel, it forms part of the peripheral stalk, linking F(1) to F(0). The sequence is that of ATP synthase subunit b from Gluconacetobacter diazotrophicus (strain ATCC 49037 / DSM 5601 / CCUG 37298 / CIP 103539 / LMG 7603 / PAl5).